The following is a 400-amino-acid chain: Chalcone synthase 7 (400 aa).

C168 is a catalytic residue.

The protein belongs to the thiolase-like superfamily. Chalcone/stilbene synthases family.

The catalysed reaction is (E)-4-coumaroyl-CoA + 3 malonyl-CoA + 3 H(+) = 2',4,4',6'-tetrahydroxychalcone + 3 CO2 + 4 CoA. The protein operates within secondary metabolite biosynthesis; flavonoid biosynthesis. The primary product of this enzyme is 4,2',4',6'-tetrahydroxychalcone (also termed naringenin-chalcone or chalcone) which can under specific conditions spontaneously isomerize into naringenin. This Sorghum bicolor (Sorghum) protein is Chalcone synthase 7 (CHS7).